The sequence spans 46 residues: Diuretic hormone (46 aa).

Ile46 carries the isoleucine amide modification.

Belongs to the sauvagine/corticotropin-releasing factor/urotensin I family.

The protein localises to the secreted. Its function is as follows. Regulation of fluid secretion. Stimulates primary urine secretion by Malpighian tubules and causes a dose-dependent stimulation of cAMP levels in the tubules. This is Diuretic hormone from Acheta domesticus (House cricket).